The primary structure comprises 193 residues: Ribosome maturation factor RimM (193 aa).

In terms of domain architecture, PRC barrel spans 112–193 (VDEYYWIDLI…CITVDWGLDF (82 aa)).

The protein belongs to the RimM family. As to quaternary structure, binds ribosomal protein uS19.

The protein localises to the cytoplasm. In terms of biological role, an accessory protein needed during the final step in the assembly of 30S ribosomal subunit, possibly for assembly of the head region. Essential for efficient processing of 16S rRNA. May be needed both before and after RbfA during the maturation of 16S rRNA. It has affinity for free ribosomal 30S subunits but not for 70S ribosomes. The sequence is that of Ribosome maturation factor RimM from Methylibium petroleiphilum (strain ATCC BAA-1232 / LMG 22953 / PM1).